The primary structure comprises 384 residues: Dihydrolipoyllysine-residue acetyltransferase component of pyruvate dehydrogenase complex (384 aa).

In terms of domain architecture, Lipoyl-binding spans 2-77 (ANEFKFTDVG…SIGQVMAVIG (76 aa)). Position 43 is an N6-lipoyllysine (Lys43). His356 is an active-site residue.

The protein belongs to the 2-oxoacid dehydrogenase family. In terms of assembly, forms a 24-polypeptide structural core with octahedral symmetry. The cofactor is (R)-lipoate.

It carries out the reaction N(6)-[(R)-dihydrolipoyl]-L-lysyl-[protein] + acetyl-CoA = N(6)-[(R)-S(8)-acetyldihydrolipoyl]-L-lysyl-[protein] + CoA. Functionally, the pyruvate dehydrogenase complex catalyzes the overall conversion of pyruvate to acetyl-CoA and CO(2). It contains multiple copies of three enzymatic components: pyruvate dehydrogenase (E1), dihydrolipoamide acetyltransferase (E2) and lipoamide dehydrogenase (E3). The polypeptide is Dihydrolipoyllysine-residue acetyltransferase component of pyruvate dehydrogenase complex (pdhC) (Mycoplasma genitalium (strain ATCC 33530 / DSM 19775 / NCTC 10195 / G37) (Mycoplasmoides genitalium)).